An 82-amino-acid polypeptide reads, in one-letter code: U16-lycotoxin-Ls1b (82 aa).

An N-terminal signal peptide occupies residues 1–22 (MSPKVQALLLLVGLITFLEVHA). The propeptide occupies 23-34 (EEELSETVESER). Disulfide bonds link Cys-36/Cys-51, Cys-43/Cys-56, Cys-50/Cys-67, and Cys-58/Cys-65.

It belongs to the neurotoxin 02 (plectoxin) family. 04 (U16-lycotoxin) subfamily. In terms of tissue distribution, expressed by the venom gland.

The protein resides in the secreted. The chain is U16-lycotoxin-Ls1b from Lycosa singoriensis (Wolf spider).